Here is a 382-residue protein sequence, read N- to C-terminus: Guanylate kinase 1 (382 aa).

The Guanylate kinase-like domain occupies 128–310; that stretch reads QKPIVISGPS…CYENLKKLLS (183 aa). An ATP-binding site is contributed by 135 to 142; sequence GPSGVGKG. Catalysis depends on residues arginine 168, arginine 261, and arginine 272. ATP is bound by residues asparagine 295 and aspartate 296.

It belongs to the guanylate kinase family. As to quaternary structure, monomer.

The protein resides in the cytoplasm. The protein localises to the nucleus. The enzyme catalyses GMP + ATP = GDP + ADP. In terms of biological role, essential for recycling GMP and indirectly, cGMP. The protein is Guanylate kinase 1 (GK1) of Oryza sativa subsp. japonica (Rice).